The primary structure comprises 526 residues: Cytochrome P450 monooxygeanse terK (526 aa).

A helical transmembrane segment spans residues 21–43; that stretch reads NWGQLTGALLFLAACTWIYLPAF. C465 provides a ligand contact to heme.

The protein belongs to the cytochrome P450 family. It depends on heme as a cofactor.

It is found in the membrane. It functions in the pathway secondary metabolite biosynthesis. In terms of biological role, cytochrome P450 monooxygeanse; part of the gene cluster that mediates the biosynthesis of terpendoles, indole-diterpene (IDT) mycotoxins including terpendole I, terpendole K, terpendole C, as well as the kinesin Eg5 inhibitor terpendole E. Terpendoles biosynthesis begins with the synthesis of geranylgeranyl diphosphate (GGPP) by a yet unidentified GGPP synthase. Condensation of indole-3-glycerol phosphate with GGPP by the prenyltransferase terC then forms 3-geranylgeranylindole (3-GGI), followed by epoxidation and cyclization of this intermediate (by the FAD-dependent monooxygeanse terM and the terpene cyclase terB) to form paspaline. The cytochrome monooxygenase terQ then hydroxylates paspalline at C-11 to yield terpendole E. The cytochrome monooxygenase terP converts terpendole E to 13-desoxyterpendole I, and terQ converts 13-desoxyterpendole I into terpendole I. TerF and terK are required for conversion of terpendole I to terpendole C which is further converted to terpendole K. The chain is Cytochrome P450 monooxygeanse terK from Tolypocladium album (Soil fungus).